A 188-amino-acid polypeptide reads, in one-letter code: Elongation factor P (188 aa).

Belongs to the elongation factor P family.

It is found in the cytoplasm. It functions in the pathway protein biosynthesis; polypeptide chain elongation. Functionally, involved in peptide bond synthesis. Stimulates efficient translation and peptide-bond synthesis on native or reconstituted 70S ribosomes in vitro. Probably functions indirectly by altering the affinity of the ribosome for aminoacyl-tRNA, thus increasing their reactivity as acceptors for peptidyl transferase. This chain is Elongation factor P, found in Gluconobacter oxydans (strain 621H) (Gluconobacter suboxydans).